A 217-amino-acid polypeptide reads, in one-letter code: Large ribosomal subunit protein uL1 (217 aa).

The protein belongs to the universal ribosomal protein uL1 family. As to quaternary structure, part of the 50S ribosomal subunit.

Functionally, binds directly to 23S rRNA. The L1 stalk is quite mobile in the ribosome, and is involved in E site tRNA release. In terms of biological role, protein L1 is also a translational repressor protein, it controls the translation of the L11 operon by binding to its mRNA. The chain is Large ribosomal subunit protein uL1 from Wolbachia pipientis wMel.